The sequence spans 426 residues: MALIDAIHAREILDSRGNPTVEVEVLLSDGQIGRAAVPSGASTGEHEAVELRDGDKGRYLGKGVQKAVDAVIDQIAPALTGFDATDQRSIDQAMLDLDGTPNKGKLGANAILGVSLAVANAAAASADLPLYKYLGGPNAHVLPVPLMNILNGGSHADSDVDIQEFMIAPIGAETFSEGLRWGVEVYHNLKSVLKEQGLSTGLGDEGGFAPNLPSNRAALDLIQEAIKNAGYTPGKDIALALDVASSEFFKDGAYQFEGKALSASEMSAYYAELVADYPLVSIEDPLDENDWEGWKTLTDAIGDKVQLVGDDLFVTNPAILQRGIDTRTANSLLVKVNQIGSLTETLDAVSLAQRAGYTTITSHRSGETEDTTIADISVATNAGQIKTGAPARSERVAKYNQLLRIEEELDDAARYAGRSAFPRFKG.

Q163 serves as a coordination point for (2R)-2-phosphoglycerate. The active-site Proton donor is E205. Mg(2+)-binding residues include D242, E283, and D310. Residues K335, R364, S365, and K386 each contribute to the (2R)-2-phosphoglycerate site. K335 functions as the Proton acceptor in the catalytic mechanism.

The protein belongs to the enolase family. Mg(2+) serves as cofactor.

Its subcellular location is the cytoplasm. The protein resides in the secreted. The protein localises to the cell surface. It catalyses the reaction (2R)-2-phosphoglycerate = phosphoenolpyruvate + H2O. Its pathway is carbohydrate degradation; glycolysis; pyruvate from D-glyceraldehyde 3-phosphate: step 4/5. Catalyzes the reversible conversion of 2-phosphoglycerate (2-PG) into phosphoenolpyruvate (PEP). It is essential for the degradation of carbohydrates via glycolysis. The protein is Enolase of Pseudarthrobacter chlorophenolicus (strain ATCC 700700 / DSM 12829 / CIP 107037 / JCM 12360 / KCTC 9906 / NCIMB 13794 / A6) (Arthrobacter chlorophenolicus).